A 151-amino-acid polypeptide reads, in one-letter code: UPF0178 protein PST_0536 (151 aa).

This sequence belongs to the UPF0178 family.

This Stutzerimonas stutzeri (strain A1501) (Pseudomonas stutzeri) protein is UPF0178 protein PST_0536.